The sequence spans 191 residues: Probable ribosome biogenesis protein RLP24 (191 aa).

Serine 136 carries the phosphoserine modification.

This sequence belongs to the eukaryotic ribosomal protein eL24 family. In terms of assembly, associated with nucleolar and cytoplasmic pre-60S particles. At the end of biogenesis it dissociates from cytoplasmic pre-60S particles and is likely to be exchanged for its ribosomal homologue, RPL24.

It is found in the nucleus. It localises to the nucleolus. Its function is as follows. Involved in the biogenesis of the 60S ribosomal subunit. Ensures the docking of NOG1 to pre-60S particles. The chain is Probable ribosome biogenesis protein RLP24 (RpL24-like) from Drosophila melanogaster (Fruit fly).